The primary structure comprises 137 residues: Small ribosomal subunit protein uS9c (137 aa).

The protein belongs to the universal ribosomal protein uS9 family.

It is found in the plastid. It localises to the chloroplast. The protein is Small ribosomal subunit protein uS9c (rps9) of Mesostigma viride (Green alga).